A 292-amino-acid chain; its full sequence is 4-hydroxy-tetrahydrodipicolinate synthase (292 aa).

Thr-45 is a binding site for pyruvate. Catalysis depends on Tyr-133, which acts as the Proton donor/acceptor. Lys-161 acts as the Schiff-base intermediate with substrate in catalysis. Ile-203 provides a ligand contact to pyruvate.

Belongs to the DapA family. In terms of assembly, homotetramer; dimer of dimers.

It is found in the cytoplasm. It carries out the reaction L-aspartate 4-semialdehyde + pyruvate = (2S,4S)-4-hydroxy-2,3,4,5-tetrahydrodipicolinate + H2O + H(+). It functions in the pathway amino-acid biosynthesis; L-lysine biosynthesis via DAP pathway; (S)-tetrahydrodipicolinate from L-aspartate: step 3/4. Functionally, catalyzes the condensation of (S)-aspartate-beta-semialdehyde [(S)-ASA] and pyruvate to 4-hydroxy-tetrahydrodipicolinate (HTPA). This Nitrosomonas eutropha (strain DSM 101675 / C91 / Nm57) protein is 4-hydroxy-tetrahydrodipicolinate synthase.